An 88-amino-acid polypeptide reads, in one-letter code: Small ribosomal subunit protein bS20 (88 aa).

Residues 1 to 20 are disordered; that stretch reads MANIKQQKKRNKTNEKRRLR.

It belongs to the bacterial ribosomal protein bS20 family.

Its function is as follows. Binds directly to 16S ribosomal RNA. The protein is Small ribosomal subunit protein bS20 of Phytoplasma australiense.